Here is a 210-residue protein sequence, read N- to C-terminus: Protein GrpE (210 aa).

It belongs to the GrpE family. In terms of assembly, homodimer.

It localises to the cytoplasm. In terms of biological role, participates actively in the response to hyperosmotic and heat shock by preventing the aggregation of stress-denatured proteins, in association with DnaK and GrpE. It is the nucleotide exchange factor for DnaK and may function as a thermosensor. Unfolded proteins bind initially to DnaJ; upon interaction with the DnaJ-bound protein, DnaK hydrolyzes its bound ATP, resulting in the formation of a stable complex. GrpE releases ADP from DnaK; ATP binding to DnaK triggers the release of the substrate protein, thus completing the reaction cycle. Several rounds of ATP-dependent interactions between DnaJ, DnaK and GrpE are required for fully efficient folding. The protein is Protein GrpE of Rhizobium leguminosarum bv. trifolii (strain WSM2304).